The sequence spans 311 residues: Tyrosine recombinase XerD (311 aa).

The region spanning 1–83 (MEFIAQFLEM…TIKSYYAFLI (83 aa)) is the Core-binding (CB) domain. A Tyr recombinase domain is found at 104 to 299 (KLPIILSIDQ…HTNHLKKALL (196 aa)). Catalysis depends on residues R145, K176, H251, R254, and H277. Y286 acts as the O-(3'-phospho-DNA)-tyrosine intermediate in catalysis.

This sequence belongs to the 'phage' integrase family. XerD subfamily. As to quaternary structure, forms a cyclic heterotetrameric complex composed of two molecules of XerC and two molecules of XerD.

The protein resides in the cytoplasm. In terms of biological role, site-specific tyrosine recombinase, which acts by catalyzing the cutting and rejoining of the recombining DNA molecules. The XerC-XerD complex is essential to convert dimers of the bacterial chromosome into monomers to permit their segregation at cell division. It also contributes to the segregational stability of plasmids. The polypeptide is Tyrosine recombinase XerD (Rickettsia prowazekii (strain Madrid E)).